A 322-amino-acid polypeptide reads, in one-letter code: tRNA U34 carboxymethyltransferase (322 aa).

Carboxy-S-adenosyl-L-methionine contacts are provided by residues Lys-90, Trp-104, Lys-109, Gly-129, 151–153 (DPT), 180–181 (IE), Met-195, Tyr-199, and Arg-314.

Belongs to the class I-like SAM-binding methyltransferase superfamily. CmoB family. As to quaternary structure, homotetramer.

The enzyme catalyses carboxy-S-adenosyl-L-methionine + 5-hydroxyuridine(34) in tRNA = 5-carboxymethoxyuridine(34) in tRNA + S-adenosyl-L-homocysteine + H(+). Functionally, catalyzes carboxymethyl transfer from carboxy-S-adenosyl-L-methionine (Cx-SAM) to 5-hydroxyuridine (ho5U) to form 5-carboxymethoxyuridine (cmo5U) at position 34 in tRNAs. In Citrobacter koseri (strain ATCC BAA-895 / CDC 4225-83 / SGSC4696), this protein is tRNA U34 carboxymethyltransferase.